The primary structure comprises 132 residues: Small ribosomal subunit protein uS8 (132 aa).

The protein belongs to the universal ribosomal protein uS8 family. In terms of assembly, part of the 30S ribosomal subunit. Contacts proteins S5 and S12.

Its function is as follows. One of the primary rRNA binding proteins, it binds directly to 16S rRNA central domain where it helps coordinate assembly of the platform of the 30S subunit. The sequence is that of Small ribosomal subunit protein uS8 from Bifidobacterium adolescentis (strain ATCC 15703 / DSM 20083 / NCTC 11814 / E194a).